Consider the following 1706-residue polypeptide: Histone acetyltransferase HAC12 (1706 aa).

Disordered stretches follow at residues 1 to 33, 251 to 284, 397 to 456, and 524 to 543; these read MNVQ…MQNL, TNNN…NSHM, VSRV…LGKT, and QNSQ…SDSS. Polar residues predominate over residues 397-406; it reads VSRVNSSLSH. A compositionally biased stretch (low complexity) spans 407 to 434; sequence QQQFQQPPNRFQQQPNQIQQQQQQFLNQ. The TAZ-type 1 zinc finger occupies 637 to 716; sequence HDPKFKNQQR…DPRCPVCVPV (80 aa). A disordered region spans residues 791–909; sequence TESCKSSIVS…PELTSKSRKP (119 aa). Over residues 794-805 the composition is skewed to polar residues; the sequence is CKSSIVSTTEAD. Composition is skewed to basic and acidic residues over residues 809–829 and 870–896; these read DAER…KVEI and PKQE…KEEL. The PHD-type zinc-finger motif lies at 998–1075; that stretch reads HYFCIPCYNE…EYTCPYCYVI (78 aa). A CBP/p300-type HAT domain is found at 1090–1526; sequence VLGAKDLPRT…VLYHLHNPTA (437 aa). Acetyl-CoA is bound by residues 1213-1215, 1232-1233, and Trp1288; these read LDS and RT. 2 consecutive ZZ-type zinc fingers follow at residues 1408-1471 and 1528-1581; these read HLQH…IADI and AFVT…SLAD. Zn(2+)-binding residues include Cys1413, Cys1416, Cys1428, Cys1431, Cys1437, Cys1440, His1453, His1461, Cys1533, Cys1536, Cys1548, Cys1551, Cys1557, Cys1560, His1569, and His1571. The TAZ-type 2 zinc finger occupies 1588 to 1671; it reads EARQLRVLQL…ECDVPRCGDL (84 aa).

It is found in the nucleus. The catalysed reaction is L-lysyl-[protein] + acetyl-CoA = N(6)-acetyl-L-lysyl-[protein] + CoA + H(+). Its function is as follows. Acetyltransferase enzyme. Acetylates histones, giving a specific tag for transcriptional activation. The protein is Histone acetyltransferase HAC12 (HAC12) of Arabidopsis thaliana (Mouse-ear cress).